A 98-amino-acid chain; its full sequence is Protein translation factor SUI1 homolog (98 aa).

The protein belongs to the SUI1 family.

In Thermococcus kodakarensis (strain ATCC BAA-918 / JCM 12380 / KOD1) (Pyrococcus kodakaraensis (strain KOD1)), this protein is Protein translation factor SUI1 homolog.